The sequence spans 344 residues: tRNA N6-adenosine threonylcarbamoyltransferase (344 aa).

Positions 111 and 115 each coordinate Fe cation. Substrate-binding positions include 136–140 (LVSGG), aspartate 169, glycine 182, and asparagine 279. Aspartate 307 is a binding site for Fe cation.

The protein belongs to the KAE1 / TsaD family. The cofactor is Fe(2+).

It localises to the cytoplasm. The catalysed reaction is L-threonylcarbamoyladenylate + adenosine(37) in tRNA = N(6)-L-threonylcarbamoyladenosine(37) in tRNA + AMP + H(+). Required for the formation of a threonylcarbamoyl group on adenosine at position 37 (t(6)A37) in tRNAs that read codons beginning with adenine. Is involved in the transfer of the threonylcarbamoyl moiety of threonylcarbamoyl-AMP (TC-AMP) to the N6 group of A37, together with TsaE and TsaB. TsaD likely plays a direct catalytic role in this reaction. This is tRNA N6-adenosine threonylcarbamoyltransferase from Mannheimia succiniciproducens (strain KCTC 0769BP / MBEL55E).